Consider the following 310-residue polypeptide: Ribosomal RNA small subunit methyltransferase H (310 aa).

Residues Gly-47–His-49, Asp-66, Phe-93, Asp-108, and Gln-115 contribute to the S-adenosyl-L-methionine site. The interval Arg-275–Pro-310 is disordered. Residues Arg-301–Pro-310 show a composition bias toward basic and acidic residues.

Belongs to the methyltransferase superfamily. RsmH family.

It is found in the cytoplasm. It carries out the reaction cytidine(1402) in 16S rRNA + S-adenosyl-L-methionine = N(4)-methylcytidine(1402) in 16S rRNA + S-adenosyl-L-homocysteine + H(+). Functionally, specifically methylates the N4 position of cytidine in position 1402 (C1402) of 16S rRNA. This Synechococcus sp. (strain CC9311) protein is Ribosomal RNA small subunit methyltransferase H.